A 91-amino-acid chain; its full sequence is Small ribosomal subunit protein uS19 (91 aa).

It belongs to the universal ribosomal protein uS19 family.

In terms of biological role, protein S19 forms a complex with S13 that binds strongly to the 16S ribosomal RNA. The chain is Small ribosomal subunit protein uS19 from Neorickettsia sennetsu (strain ATCC VR-367 / Miyayama) (Ehrlichia sennetsu).